Reading from the N-terminus, the 276-residue chain is 2-hydroxy-6-oxo-2,4-heptadienoate hydrolase (276 aa).

The region spanning 28 to 259 (NPVVLVHGSG…GRCGHWVQIE (232 aa)) is the AB hydrolase-1 domain. Catalysis depends on residues S105, D226, and H254.

Belongs to the DmpD/TodF/XylF esterase family.

The catalysed reaction is (2Z,4E)-2-hydroxy-6-oxohepta-2,4-dienoate + H2O = (2Z)-2-hydroxypenta-2,4-dienoate + acetate + H(+). It functions in the pathway xenobiotic degradation; toluene degradation. Catalyzes the hydrolysis of 2-hydroxy-6-oxohepta-2,4-dienoate into 2-hydroxypenta-2,4-dienoate and acetate. In Pseudomonas putida (strain ATCC 700007 / DSM 6899 / JCM 31910 / BCRC 17059 / LMG 24140 / F1), this protein is 2-hydroxy-6-oxo-2,4-heptadienoate hydrolase (todF).